A 317-amino-acid polypeptide reads, in one-letter code: Olfactory receptor 1082 (317 aa).

The Extracellular segment spans residues 1-26; sequence MESGNSTRRFSSFFLLGFTENPQLHF. N-linked (GlcNAc...) asparagine glycosylation is present at asparagine 5. The chain crosses the membrane as a helical span at residues 27-51; the sequence is LIFALFLSMYLVTVLGNLLIIMAII. Residues 52–58 lie on the Cytoplasmic side of the membrane; sequence TQSHLHT. A helical transmembrane segment spans residues 59-80; sequence PMYFFLANLSFVDICFTSTTIP. Over 81–101 the chain is Extracellular; that stretch reads KMLVNIYTQSKSITYEDCISQ. A disulfide bridge connects residues cysteine 98 and cysteine 190. The helical transmembrane segment at 102 to 121 threads the bilayer; it reads MCVFLVFAELGNFLLAVMAY. Over 122 to 140 the chain is Cytoplasmic; that stretch reads DRYVAXCHPLCYTVIVNHR. Residues 141-159 form a helical membrane-spanning segment; that stretch reads LCILLLLLSWVISIFHAFI. Residues 160 to 197 are Extracellular-facing; the sequence is QSLIVLQLTFCGDVKIPHFFCELNQLSQLTCSDNFPSH. Residues 198-220 traverse the membrane as a helical segment; that stretch reads LIMNLVPVMLAAISFSGILYSYF. The Cytoplasmic segment spans residues 221–237; that stretch reads KIVSSIHSISTVQGKYK. A helical transmembrane segment spans residues 238–261; that stretch reads AFSTCASHLSIVSLFYSTGLGVYV. Residues 262–273 lie on the Extracellular side of the membrane; sequence SSAVVQSSHSAA. The helical transmembrane segment at 274 to 293 threads the bilayer; the sequence is SASVMYTVVTPMLNPFIYSL. Topologically, residues 294–317 are cytoplasmic; sequence RNKDVKRALERLLEGNCKVHHWTG.

Belongs to the G-protein coupled receptor 1 family. Olfactory epithelium.

The protein localises to the cell membrane. In terms of biological role, odorant receptor. In Rattus norvegicus (Rat), this protein is Olfactory receptor 1082 (Olr1082).